A 376-amino-acid chain; its full sequence is Succinyl-diaminopimelate desuccinylase (376 aa).

Zn(2+) is bound at residue His66. Asp68 is an active-site residue. Asp99 lines the Zn(2+) pocket. Glu133 serves as the catalytic Proton acceptor. Zn(2+)-binding residues include Glu134, Glu162, and His348.

It belongs to the peptidase M20A family. DapE subfamily. As to quaternary structure, homodimer. Requires Zn(2+) as cofactor. It depends on Co(2+) as a cofactor.

The catalysed reaction is N-succinyl-(2S,6S)-2,6-diaminopimelate + H2O = (2S,6S)-2,6-diaminopimelate + succinate. Its pathway is amino-acid biosynthesis; L-lysine biosynthesis via DAP pathway; LL-2,6-diaminopimelate from (S)-tetrahydrodipicolinate (succinylase route): step 3/3. Its function is as follows. Catalyzes the hydrolysis of N-succinyl-L,L-diaminopimelic acid (SDAP), forming succinate and LL-2,6-diaminopimelate (DAP), an intermediate involved in the bacterial biosynthesis of lysine and meso-diaminopimelic acid, an essential component of bacterial cell walls. This Xanthomonas oryzae pv. oryzae (strain PXO99A) protein is Succinyl-diaminopimelate desuccinylase.